The sequence spans 136 residues: Probable intron-encoded DNA endonuclease 3 (136 aa).

The protein belongs to the LAGLIDADG endonuclease family.

The protein localises to the mitochondrion. In terms of biological role, mitochondrial DNA endonuclease involved in intron homing. The polypeptide is Probable intron-encoded DNA endonuclease 3 (hegI3) (Mycosarcoma maydis (Corn smut fungus)).